The following is a 69-amino-acid chain: Small, acid-soluble spore protein 1 (69 aa).

It belongs to the alpha/beta-type SASP family.

In terms of biological role, SASP are bound to spore DNA. They are double-stranded DNA-binding proteins that cause DNA to change to an a-like conformation. They protect the DNA backbone from chemical and enzymatic cleavage and are thus involved in dormant spore's high resistance to UV light. This is Small, acid-soluble spore protein 1 (Su-1) from Sporosarcina ureae.